A 419-amino-acid chain; its full sequence is MLLTIGAQDLVNHLRAQFSAQPPRRLGVAVSGGGDSVALMHLLARCFPRGEVKLCVATVDHGLRSESASEAALVARQAAGLGLPHETLLWTGWTGEGNLQDQARRARYGLLTDWALRNRVTTVALAHTADDQAETLLMRLGRSAGVSGLAAMAPRRMQDGVVLVRPLLGITRDALRDFLRAEGIAWAEDPSNEDIRYDRIKARQALAGLAPMGIDAQRLAEVAANMARAREALDWYTFLAARDLTRIDGGDVLLEPRGFRTLPDEIARRLLLHIVGWIGGGEYPPRRVAVAEALSALRHERSSQLGGCLILGQGRRIRFCREWKAVETLTVPQGALWDGRWVLRGPVVKDGELRALGAAGLKLCPDWRQTGRPYAALIASPSVWSGADLVAAPLAGLANGWTAELESGEEDFYASLLSH.

ATP is bound at residue 31-36 (SGGGDS).

It belongs to the tRNA(Ile)-lysidine synthase family.

It is found in the cytoplasm. The catalysed reaction is cytidine(34) in tRNA(Ile2) + L-lysine + ATP = lysidine(34) in tRNA(Ile2) + AMP + diphosphate + H(+). In terms of biological role, ligates lysine onto the cytidine present at position 34 of the AUA codon-specific tRNA(Ile) that contains the anticodon CAU, in an ATP-dependent manner. Cytidine is converted to lysidine, thus changing the amino acid specificity of the tRNA from methionine to isoleucine. This chain is tRNA(Ile)-lysidine synthase, found in Ruegeria pomeroyi (strain ATCC 700808 / DSM 15171 / DSS-3) (Silicibacter pomeroyi).